The primary structure comprises 406 residues: Endoplasmic reticulum resident protein 44 (406 aa).

Positions M1–A29 are cleaved as a signal peptide. Residues E30–Q138 form the Thioredoxin domain. Intrachain disulfides connect C189/C241 and C301/C318. Residues W236 to R285 are interaction with ITPR1. Residues F360 to F387 are disordered. Over residues V378–F387 the composition is skewed to polar residues. The short motif at R403–L406 is the Prevents secretion from ER element.

In terms of assembly, forms mixed disulfides with both ERO1A and ERO1B and cargo folding intermediates; the interactions with ERO1A and ERO1B result in their retention in the endoplasmic reticulum. Directly interacts with ITPR1 in a pH-, redox state- and calcium-dependent manner, but not with ITPR2 or ITPR3. The strength of this interaction inversely correlates with calcium concentration.

Its subcellular location is the endoplasmic reticulum lumen. Functionally, mediates thiol-dependent retention in the early secretory pathway, forming mixed disulfides with substrate proteins through its conserved CRFS motif. Inhibits the calcium channel activity of ITPR1. May have a role in the control of oxidative protein folding in the endoplasmic reticulum. Required to retain ERO1A and ERO1B in the endoplasmic reticulum. In Bos taurus (Bovine), this protein is Endoplasmic reticulum resident protein 44 (ERP44).